The following is a 308-amino-acid chain: Protoheme IX farnesyltransferase (308 aa).

The next 8 membrane-spanning stretches (helical) occupy residues 31–51 (VIEL…RGTV), 53–73 (PLLI…ANTL), 102–122 (HALI…WLST), 124–144 (LLSG…YTML), 149–169 (TSQN…IGWS), 170–190 (AVTG…FFWT), 242–262 (LATG…FLVM), and 288–308 (YLAV…PTLL).

This sequence belongs to the UbiA prenyltransferase family. Protoheme IX farnesyltransferase subfamily.

Its subcellular location is the cell membrane. It carries out the reaction heme b + (2E,6E)-farnesyl diphosphate + H2O = Fe(II)-heme o + diphosphate. Its pathway is porphyrin-containing compound metabolism; heme O biosynthesis; heme O from protoheme: step 1/1. In terms of biological role, converts heme B (protoheme IX) to heme O by substitution of the vinyl group on carbon 2 of heme B porphyrin ring with a hydroxyethyl farnesyl side group. The protein is Protoheme IX farnesyltransferase of Mycolicibacterium smegmatis (strain ATCC 700084 / mc(2)155) (Mycobacterium smegmatis).